A 328-amino-acid polypeptide reads, in one-letter code: Aryl-hydrocarbon-interacting protein-like 1 (328 aa).

The PPIase FKBP-type domain occupies 53 to 145 (KQVGQPMNII…DLDELQKEPQ (93 aa)). TPR repeat units follow at residues 178–211 (VPLLHGEGNRLYKLGRYDQAATKYQEAIVCLRNL), 230–263 (NTLILNYCQCLLKKEEYYEVLEHTSDILRHHPGI), and 264–297 (VKAYYMRARAHAEVWNAEEAKADLEKVLELEPSM).

As to quaternary structure, interacts with NUB1. In terms of tissue distribution, highly expressed in retina.

It localises to the cytoplasm. It is found in the nucleus. Functionally, may be important in protein trafficking and/or protein folding and stabilization. The sequence is that of Aryl-hydrocarbon-interacting protein-like 1 (Aipl1) from Rattus norvegicus (Rat).